We begin with the raw amino-acid sequence, 226 residues long: PtdIns3K complex I subunit atg38 (226 aa).

An N-acetylserine modification is found at serine 2. Coiled-coil stretches lie at residues 52 to 85 and 182 to 209; these read DVTQ…ENNI and FKEY…LRER.

The protein belongs to the ATG38 family. As to quaternary structure, homodimer. Component of the autophagy-specific VPS34 PI3-kinase complex I composed of VPS15, VPS30, VPS34, ATG14 and an ATG38 homodimer. Interacts directly with ATG14 and VPS34.

It is found in the cytoplasm. The protein localises to the preautophagosomal structure membrane. In terms of biological role, autophagy-related protein required for cytoplasm to vacuole transport (Cvt) and autophagy as a part of the autophagy-specific VPS34 PI3-kinase complex I. This complex is essential to recruit the ATG8-phosphatidylinositol conjugate and the ATG12-ATG5 conjugate to the pre-autophagosomal structure. ATG38 is required for the integrity of the active PI3-kinase complex I by maintaining an association between VPS15-VPS34 and ATG14-VPS30 subcomplexes. The protein is PtdIns3K complex I subunit atg38 of Saccharomyces cerevisiae (strain ATCC 204508 / S288c) (Baker's yeast).